A 49-amino-acid polypeptide reads, in one-letter code: Large ribosomal subunit protein bL33 (49 aa).

The protein belongs to the bacterial ribosomal protein bL33 family.

The polypeptide is Large ribosomal subunit protein bL33 (Natranaerobius thermophilus (strain ATCC BAA-1301 / DSM 18059 / JW/NM-WN-LF)).